The chain runs to 378 residues: Alkanesulfonate monooxygenase (378 aa).

Belongs to the SsuD family.

It carries out the reaction an alkanesulfonate + FMNH2 + O2 = an aldehyde + FMN + sulfite + H2O + 2 H(+). Its function is as follows. Catalyzes the desulfonation of aliphatic sulfonates. This Bacillus velezensis (strain DSM 23117 / BGSC 10A6 / LMG 26770 / FZB42) (Bacillus amyloliquefaciens subsp. plantarum) protein is Alkanesulfonate monooxygenase.